A 353-amino-acid chain; its full sequence is Mitochondrial glutathione transporter SLC25A40 (353 aa).

Solcar repeat units lie at residues 14–132 (ITPF…LFAL), 140–224 (RSDL…GKWW), and 234–328 (PTVA…GKAF). Transmembrane regions (helical) follow at residues 20–40 (MMAS…LDVV), 104–124 (LWSG…IYFT), 143–163 (LAPL…ISPL), 200–221 (WGPT…YEKG), 237–257 (AITF…TLPF), and 299–319 (GLFA…AIMI).

This sequence belongs to the mitochondrial carrier (TC 2.A.29) family.

It is found in the mitochondrion inner membrane. The enzyme catalyses glutathione(in) = glutathione(out). In terms of biological role, probable mitochondrial transporter required for glutathione import into mitochondria. Glutathione, which plays key roles in oxidative metabolism, is produced exclusively in the cytosol and is imported in many organelles. Mitochondrial glutathione is required for the activity and stability of proteins containing iron-sulfur clusters. The polypeptide is Mitochondrial glutathione transporter SLC25A40 (Danio rerio (Zebrafish)).